We begin with the raw amino-acid sequence, 257 residues long: Glutamate racemase (257 aa).

Residues 12-13 (DS) and 44-45 (YG) each bind substrate. C75 functions as the Proton donor/acceptor in the catalytic mechanism. 76-77 (NT) lines the substrate pocket. C185 (proton donor/acceptor) is an active-site residue. 186-187 (TH) is a binding site for substrate.

It belongs to the aspartate/glutamate racemases family.

The catalysed reaction is L-glutamate = D-glutamate. It participates in cell wall biogenesis; peptidoglycan biosynthesis. Its function is as follows. Provides the (R)-glutamate required for cell wall biosynthesis. The chain is Glutamate racemase from Clostridium botulinum (strain Loch Maree / Type A3).